Here is a 139-residue protein sequence, read N- to C-terminus: D-ribose pyranase (139 aa).

H20 functions as the Proton donor in the catalytic mechanism. Substrate is bound by residues D28, H106, and 128–130 (YAN).

This sequence belongs to the RbsD / FucU family. RbsD subfamily. As to quaternary structure, homodecamer.

It localises to the cytoplasm. The enzyme catalyses beta-D-ribopyranose = beta-D-ribofuranose. Its pathway is carbohydrate metabolism; D-ribose degradation; D-ribose 5-phosphate from beta-D-ribopyranose: step 1/2. Catalyzes the interconversion of beta-pyran and beta-furan forms of D-ribose. The protein is D-ribose pyranase of Cronobacter sakazakii (strain ATCC BAA-894) (Enterobacter sakazakii).